The sequence spans 99 residues: Malonate decarboxylase acyl carrier protein (99 aa).

S25 carries the O-(phosphoribosyl dephospho-coenzyme A)serine modification.

The protein belongs to the MdcC family. Covalently binds the prosthetic group of malonate decarboxylase.

It is found in the cytoplasm. Its function is as follows. Subunit of malonate decarboxylase, it is an acyl carrier protein to which acetyl and malonyl thioester residues are bound via a 2'-(5''-phosphoribosyl)-3'-dephospho-CoA prosthetic group and turn over during the catalytic mechanism. The sequence is that of Malonate decarboxylase acyl carrier protein from Stutzerimonas stutzeri (strain A1501) (Pseudomonas stutzeri).